The chain runs to 534 residues: Ulvan lyase NLR42 (534 aa).

An N-terminal signal peptide occupies residues 1–47 (MVFFKDLFIFKSLIKGSLYSGHMKKKLLNYLPLFALMLFTVSMMAQT). Cys59 and Cys89 form a disulfide bridge. Positions 63, 68, 86, 88, 91, and 92 each coordinate Ca(2+). A substrate-binding site is contributed by Tyr164. The active-site Proton acceptor is Lys169. Substrate-binding positions include 218–223 (SGAAGR) and 288–291 (YRVK). Catalysis depends on Tyr288, which acts as the Proton donor/acceptor. A ulvan-binding domain region spans residues 316–449 (PAADIYRIKN…SKWNLESTTL (134 aa)). A propeptide spans 450-534 (SVDSQQIASV…KVYQTKLIVN (85 aa)) (removed by the type IX secretion system (T9SS)).

Belongs to the polysaccharide lyase 28 family. It depends on Ca(2+) as a cofactor.

The protein resides in the secreted. Its function is as follows. Ulvan lyase involved in ulvan degradation. Ulvan is the main polysaccharide component of the Ulvales (green seaweed) cell wall. It is composed of disaccharide building blocks comprising 3-sulfated rhamnose (Rha3S) linked to D-glucuronic acid (GlcA), L-iduronic acid (IduA), or D-xylose (Xyl). Ulvan lyase catalyzes the endolytic cleavage of the glycosidic bond between Rha3S and the uronic acids GlcA or IduA, producing oligosaccharides that have unsaturated 4-deoxy-L-threo-hex-4-enopyranosiduronic acid (deltaUA) at the non-reducing end. This results eventually in the degradation of the ulvan polysaccharide into deltaUA-Rha3S disaccharides and deltaUA-Rha3S-Xyl-Rha3S tetrasaccharides. This Nonlabens ulvanivorans (Persicivirga ulvanivorans) protein is Ulvan lyase NLR42.